A 180-amino-acid polypeptide reads, in one-letter code: Segregation and condensation protein B (180 aa).

It belongs to the ScpB family. As to quaternary structure, homodimer. Homodimerization may be required to stabilize the binding of ScpA to the Smc head domains. Component of a cohesin-like complex composed of ScpA, ScpB and the Smc homodimer, in which ScpA and ScpB bind to the head domain of Smc. The presence of the three proteins is required for the association of the complex with DNA.

The protein localises to the cytoplasm. Participates in chromosomal partition during cell division. May act via the formation of a condensin-like complex containing Smc and ScpA that pull DNA away from mid-cell into both cell halves. This Staphylococcus epidermidis (strain ATCC 35984 / DSM 28319 / BCRC 17069 / CCUG 31568 / BM 3577 / RP62A) protein is Segregation and condensation protein B.